The following is a 209-amino-acid chain: ATP phosphoribosyltransferase (209 aa).

The protein belongs to the ATP phosphoribosyltransferase family. Short subfamily. In terms of assembly, heteromultimer composed of HisG and HisZ subunits.

The protein localises to the cytoplasm. It catalyses the reaction 1-(5-phospho-beta-D-ribosyl)-ATP + diphosphate = 5-phospho-alpha-D-ribose 1-diphosphate + ATP. It participates in amino-acid biosynthesis; L-histidine biosynthesis; L-histidine from 5-phospho-alpha-D-ribose 1-diphosphate: step 1/9. Its function is as follows. Catalyzes the condensation of ATP and 5-phosphoribose 1-diphosphate to form N'-(5'-phosphoribosyl)-ATP (PR-ATP). Has a crucial role in the pathway because the rate of histidine biosynthesis seems to be controlled primarily by regulation of HisG enzymatic activity. This is ATP phosphoribosyltransferase from Sulfurimonas denitrificans (strain ATCC 33889 / DSM 1251) (Thiomicrospira denitrificans (strain ATCC 33889 / DSM 1251)).